Here is a 502-residue protein sequence, read N- to C-terminus: NAD(P)H-quinone oxidoreductase subunit 2, chloroplastic (502 aa).

14 consecutive transmembrane segments (helical) span residues 15–35 (VLPEAIIICSSLFILIIDLIF), 42–62 (VLPYMAILGLILSMLSLLFQW), 79–99 (LSIAFRLLIALSSMLCVLLSI), 108–128 (TLSEFLVIFLTATLGAMLLCG), 132–152 (ILMIFLSLETLGLCSYILTGY), 167–187 (LLIGAASSSILLYGFSLLYGL), 210–230 (LASLVALALIIVGISFKIAAA), 253–275 (VSSKAAGLMLATRIMTILFPYII), 278–298 (WHNIFQILAILSMAIGNIIAI), 307–327 (LGYSSIAQAGFLLVGLLAGNI), 334–354 (LVYMLIYLFMNLGAFACVILF), 375–395 (ILALCLSICLLSLGGIPPFGG), 413–433 (LLVFVGLLTSVISIFYYIKII), and 468–488 (ILICVIGTTISGIFVNPIISI).

This sequence belongs to the complex I subunit 2 family. As to quaternary structure, NDH is composed of at least 16 different subunits, 5 of which are encoded in the nucleus.

Its subcellular location is the plastid. It is found in the chloroplast thylakoid membrane. It carries out the reaction a plastoquinone + NADH + (n+1) H(+)(in) = a plastoquinol + NAD(+) + n H(+)(out). The enzyme catalyses a plastoquinone + NADPH + (n+1) H(+)(in) = a plastoquinol + NADP(+) + n H(+)(out). NDH shuttles electrons from NAD(P)H:plastoquinone, via FMN and iron-sulfur (Fe-S) centers, to quinones in the photosynthetic chain and possibly in a chloroplast respiratory chain. The immediate electron acceptor for the enzyme in this species is believed to be plastoquinone. Couples the redox reaction to proton translocation, and thus conserves the redox energy in a proton gradient. The sequence is that of NAD(P)H-quinone oxidoreductase subunit 2, chloroplastic from Mesostigma viride (Green alga).